Here is a 517-residue protein sequence, read N- to C-terminus: MDIIGGQHLRQMWDDLADVYGHKTALICESSGGVVNRYSYLELNQEINRTANLFYTLGIRKGDKVALHLDNCPEFIFCWFGLAKIGAIMVPINARLLCEESAWILQNSQACLLVTSAQFYPMYQQIQQEDATQLRHICLTDVALPADDGVSSFTQLKNQQPATLCYAPPLSTDDTAEILFTSGTTSRPKGVVITHYNLRFAGYYSAWQCALRDDDVYLTVMPAFHIDCQCTAAMAAFSAGATFVLVEKYSARAFWGQVQKYRATVTECIPMMIRTLMVQPPSANDQQHRLREVMFYLNLSEQEKDAFCERFGVRLLTSYGMTETIVGIIGDRPGDKRRWPSIGRVGFCYEAEIRDDHNRPLPAGEIGEICIKGIPGKTIFKEYFLNPQATAKVLEADGWLHTGDTGYRDEEDFFYFVDRRCNMIKRGGENVSCVELENIIAAHPKIQDIVVVGIKDSIRDEAIKAFVVLNEGETLSEEEFFRFCEQNMAKFKVPSYLEIRKDLPRNCSGKIIRKNLK.

Belongs to the ATP-dependent AMP-binding enzyme family.

It carries out the reaction 4-(trimethylamino)butanoate + ATP + CoA = 4-(trimethylamino)butanoyl-CoA + AMP + diphosphate. The catalysed reaction is crotonobetaine + ATP + CoA = crotonobetainyl-CoA + AMP + diphosphate. It catalyses the reaction (R)-carnitine + ATP + CoA = (R)-carnitinyl-CoA + AMP + diphosphate. Its pathway is amine and polyamine metabolism; carnitine metabolism. Catalyzes the transfer of CoA to carnitine, generating the initial carnitinyl-CoA needed for the CaiB reaction cycle. Also has activity toward crotonobetaine and gamma-butyrobetaine. The polypeptide is Crotonobetaine/carnitine--CoA ligase (Escherichia coli (strain K12 / MC4100 / BW2952)).